An 86-amino-acid chain; its full sequence is Small ribosomal subunit protein uS17 (86 aa).

Belongs to the universal ribosomal protein uS17 family. Part of the 30S ribosomal subunit.

One of the primary rRNA binding proteins, it binds specifically to the 5'-end of 16S ribosomal RNA. The sequence is that of Small ribosomal subunit protein uS17 from Helicobacter acinonychis (strain Sheeba).